The following is a 1944-amino-acid chain: Anaphase-promoting complex subunit 1 (1944 aa).

Phosphoserine occurs at positions 51 and 60. Position 291 is a phosphothreonine (Thr291). Residues 312-343 (ESPVASPFQNYSSIHSQSRSTSSPSLHSRSPS) are disordered. A phosphoserine mark is found at Ser313, Ser341, Ser343, Ser355, Ser362, Ser373, and Ser377. Positions 323-343 (SSIHSQSRSTSSPSLHSRSPS) are enriched in low complexity. The disordered stretch occupies residues 370 to 395 (NLSSHSQSPKRHSISHSPSGSFNDSF). A compositionally biased stretch (polar residues) spans 384–393 (SHSPSGSFND). Thr537 carries the post-translational modification Phosphothreonine. A phosphoserine mark is found at Ser547 and Ser555. At Tyr571 the chain carries Phosphotyrosine. Ser680, Ser686, and Ser688 each carry phosphoserine. The segment at 991–1014 (NLPRGKSVLSSEVSSGTEAEEEDD) is disordered. Polar residues predominate over residues 998–1007 (VLSSEVSSGT). PC repeat units lie at residues 1297 to 1325 (AAGL…PEQL), 1366 to 1404 (GATL…PEFL), 1467 to 1501 (GACL…YLSA), and 1520 to 1552 (LLSL…EMNY).

The protein belongs to the APC1 family. The mammalian APC/C is composed at least of 14 distinct subunits ANAPC1, ANAPC2, CDC27/APC3, ANAPC4, ANAPC5, CDC16/APC6, ANAPC7, CDC23/APC8, ANAPC10, ANAPC11, CDC26/APC12, ANAPC13, ANAPC15 and ANAPC16 that assemble into a complex of at least 19 chains with a combined molecular mass of around 1.2 MDa; APC/C interacts with FZR1 and FBXO5. Post-translationally, phosphorylated. Phosphorylation on Ser-355 occurs specifically during mitosis. In terms of tissue distribution, abundantly expressed in proliferating fibroblasts, juvenile testis, adult brain and epididymis.

It functions in the pathway protein modification; protein ubiquitination. Functionally, component of the anaphase promoting complex/cyclosome (APC/C), a cell cycle-regulated E3 ubiquitin ligase that controls progression through mitosis and the G1 phase of the cell cycle. The APC/C complex acts by mediating ubiquitination and subsequent degradation of target proteins: it mainly mediates the formation of 'Lys-11'-linked polyubiquitin chains and, to a lower extent, the formation of 'Lys-48'- and 'Lys-63'-linked polyubiquitin chains. The APC/C complex catalyzes assembly of branched 'Lys-11'-/'Lys-48'-linked branched ubiquitin chains on target proteins. In Mus musculus (Mouse), this protein is Anaphase-promoting complex subunit 1 (Anapc1).